Consider the following 142-residue polypeptide: Deoxyuridine 5'-triphosphate nucleotidohydrolase (142 aa).

The protein belongs to the dUTPase family. Mg(2+) serves as cofactor.

The catalysed reaction is dUTP + H2O = dUMP + diphosphate + H(+). This enzyme is involved in nucleotide metabolism: it produces dUMP, the immediate precursor of thymidine nucleotides and it decreases the intracellular concentration of dUTP so that uracil cannot be incorporated into DNA. This is Deoxyuridine 5'-triphosphate nucleotidohydrolase (DUT) from Swinepox virus (strain Kasza) (SWPV).